The primary structure comprises 145 residues: UPF0735 ACT domain-containing protein CLD_1535 (145 aa).

An ACT domain is found at 69–144 (TIGLLLGHER…NVIKVDLIAM (76 aa)).

Belongs to the UPF0735 family.

The chain is UPF0735 ACT domain-containing protein CLD_1535 from Clostridium botulinum (strain Okra / Type B1).